Reading from the N-terminus, the 858-residue chain is Translation initiation factor IF-2 (858 aa).

The disordered stretch occupies residues 59-147; the sequence is KEHAEKRRER…GKKLEGQERK (89 aa). The 170-residue stretch at 361 to 530 folds into the tr-type G domain; that stretch reads PRPPVVVVMG…LLVADLLELK (170 aa). Positions 370-377 are G1; the sequence is GHVDHGKT. Residue 370–377 participates in GTP binding; it reads GHVDHGKT. Positions 395–399 are G2; it reads GITQH. The tract at residues 416 to 419 is G3; sequence DTPG. Residues 416 to 420 and 470 to 473 each bind GTP; these read DTPGH and NKID. The tract at residues 470 to 473 is G4; it reads NKID. The tract at residues 506-508 is G5; it reads SAK.

Belongs to the TRAFAC class translation factor GTPase superfamily. Classic translation factor GTPase family. IF-2 subfamily.

It localises to the cytoplasm. In terms of biological role, one of the essential components for the initiation of protein synthesis. Protects formylmethionyl-tRNA from spontaneous hydrolysis and promotes its binding to the 30S ribosomal subunits. Also involved in the hydrolysis of GTP during the formation of the 70S ribosomal complex. The chain is Translation initiation factor IF-2 from Caldicellulosiruptor saccharolyticus (strain ATCC 43494 / DSM 8903 / Tp8T 6331).